The primary structure comprises 926 residues: MNYKDTLNLPKTDFPMKAKLPSREPEFLQEWESNNLYQRVQQKRSGKPKYILHDGPPYANGNIHMGHALNKVLKDIVVKFKTMQGYDSPYVPGWDTHGLPIEHQITKTEKVDRKSMSDVEFRKKCHDYAMKYVEIQKEEFKRLGVRGDWDNPYLTLSPEFEAEQVKLFGEMAQKGYIYKGLKPVYWCTDCETALAEAEVEYHDKRSPSIYVGFHVKDSKGEFNEEGVEFIIWTTTPWTIPANMAIALHPEFQYSLIKSGEKHYIVATDLLETVAEEAKLGEYQIIREYTGRELEGIVCQHPLFDSRESLVILGDHVTLEQGTGCVHTAPGHGHEDYEVAQKYDLEVLSPLNDSGVFTEEAGQFQGLYYDKANKEITQALDKRGALLSLSFITHQYPCCWRCKESVIFRATEQWFASVDGFRQDALKAIEDVDWIPAWGEERIKAMVMNRGDWCISRQRVWGVPLPIFYCQECGHELITEESISAVAELFRQEGSDAWFEKEAPEILPQGIQCSCGAKKFSKETDIMDVWFDSGSTHRGVCAQRQELAWPVDLYLEGSDQYRGWFQSSLLTAVATKGESPYRECLTNGWVVDGEGKKMSKSQGNVIAPQDITNQYGADILRLWVASSEFKQDVRVSQKILKQTAEAYRKIRNTARFILGNLYDFTPEKDYVSFDQLEEIDSYILCRLQKVIDQATRAYDEFEFHEFYHLIHNFCVVELSQFYLDVIKDRIYTMPTESRERRAAQTTMYYLLDSLVKMLAPVLTFTSEEIWQYLPGDREESIQLTDWPEVNEELVDNELEQKWANFLEFRKEVAKALENARKDKKIGSSLESKILIYADEDLFKKLQSFEDNLEELFIVSQVELKKAEQLTETVKNQALSSEDVEQASIIIEAAQGEKCPRCWNYHPEVTKAEELCPRCSHVLETSNK.

Positions 57–67 (PYANGNIHMGH) match the 'HIGH' region motif. E555 lines the L-isoleucyl-5'-AMP pocket. The 'KMSKS' region motif lies at 596–600 (KMSKS). K599 is an ATP binding site. Zn(2+) contacts are provided by C897, C900, C914, and C917.

It belongs to the class-I aminoacyl-tRNA synthetase family. IleS type 1 subfamily. In terms of assembly, monomer. Requires Zn(2+) as cofactor.

It localises to the cytoplasm. It catalyses the reaction tRNA(Ile) + L-isoleucine + ATP = L-isoleucyl-tRNA(Ile) + AMP + diphosphate. Its function is as follows. Catalyzes the attachment of isoleucine to tRNA(Ile). As IleRS can inadvertently accommodate and process structurally similar amino acids such as valine, to avoid such errors it has two additional distinct tRNA(Ile)-dependent editing activities. One activity is designated as 'pretransfer' editing and involves the hydrolysis of activated Val-AMP. The other activity is designated 'posttransfer' editing and involves deacylation of mischarged Val-tRNA(Ile). The polypeptide is Isoleucine--tRNA ligase (Natranaerobius thermophilus (strain ATCC BAA-1301 / DSM 18059 / JW/NM-WN-LF)).